The chain runs to 456 residues: Cysteine--tRNA ligase (456 aa).

C28 contributes to the Zn(2+) binding site. The 'HIGH' region signature appears at 30–40; the sequence is ITVYDHCHLGH. Positions 209, 234, and 238 each coordinate Zn(2+). A 'KMSKS' region motif is present at residues 266-270; sequence KMAKS. K269 is a binding site for ATP.

The protein belongs to the class-I aminoacyl-tRNA synthetase family. In terms of assembly, monomer. Zn(2+) is required as a cofactor.

The protein localises to the cytoplasm. The enzyme catalyses tRNA(Cys) + L-cysteine + ATP = L-cysteinyl-tRNA(Cys) + AMP + diphosphate. The chain is Cysteine--tRNA ligase from Legionella pneumophila (strain Paris).